The sequence spans 463 residues: Fumarate hydratase class II (463 aa).

Substrate is bound by residues 98–100 (SGT), 129–132 (HPND), 139–141 (SSN), and Thr-187. His-188 serves as the catalytic Proton donor/acceptor. Residue Ser-318 is part of the active site. Substrate contacts are provided by residues Ser-319 and 324–326 (KVN).

The protein belongs to the class-II fumarase/aspartase family. Fumarase subfamily. As to quaternary structure, homotetramer.

The protein localises to the cytoplasm. It catalyses the reaction (S)-malate = fumarate + H2O. It participates in carbohydrate metabolism; tricarboxylic acid cycle; (S)-malate from fumarate: step 1/1. Involved in the TCA cycle. Catalyzes the stereospecific interconversion of fumarate to L-malate. The polypeptide is Fumarate hydratase class II (Brucella melitensis biotype 1 (strain ATCC 23456 / CCUG 17765 / NCTC 10094 / 16M)).